A 95-amino-acid chain; its full sequence is Small ribosomal subunit protein bS20 (95 aa).

The disordered stretch occupies residues 1-22; the sequence is MANIKSQIKRNRTNENNRLRNK. Positions 12–22 are enriched in basic and acidic residues; the sequence is RTNENNRLRNK.

It belongs to the bacterial ribosomal protein bS20 family.

Functionally, binds directly to 16S ribosomal RNA. This chain is Small ribosomal subunit protein bS20, found in Tropheryma whipplei (strain TW08/27) (Whipple's bacillus).